The chain runs to 168 residues: GTP-dependent dephospho-CoA kinase (168 aa).

Residues aspartate 40, valine 41, valine 42, aspartate 59, and glutamate 112 each contribute to the GTP site.

Belongs to the GTP-dependent DPCK family.

It carries out the reaction 3'-dephospho-CoA + GTP = GDP + CoA + H(+). The protein operates within cofactor biosynthesis; coenzyme A biosynthesis. Its function is as follows. Catalyzes the GTP-dependent phosphorylation of the 3'-hydroxyl group of dephosphocoenzyme A to form coenzyme A (CoA). This Methanoregula boonei (strain DSM 21154 / JCM 14090 / 6A8) protein is GTP-dependent dephospho-CoA kinase.